A 246-amino-acid chain; its full sequence is MKRPPVPLLQNGVRADGRTPDQMREVKIAVGVVSNADGSAMVSYGATTAVAAVYGPREMHPRHLSLPDRGVMRVRYHMAPFSTKDERKSPTPSRREIEISKILREALEPAIVLEQYPRSRIDVFVEILQADGSTRVASLTAASLALADAGIYMRDLVVGVSVGLVDGTVVLDLNGLEDQYGEGDLPLGYMPNLKRFTLLQLDGAWTRDMFLQALNLAVRGAEYVYQIARDALKNKYMSIAEEIYGR.

It belongs to the RNase PH family. Rrp41 subfamily. In terms of assembly, component of the archaeal exosome complex. Forms a hexameric ring-like arrangement composed of 3 Rrp41-Rrp42 heterodimers. The hexameric ring associates with a trimer of Rrp4 and/or Csl4 subunits.

The protein localises to the cytoplasm. Catalytic component of the exosome, which is a complex involved in RNA degradation. Has 3'-&gt;5' exoribonuclease activity. Can also synthesize heteromeric RNA-tails. The chain is Exosome complex component Rrp41 from Pyrobaculum aerophilum (strain ATCC 51768 / DSM 7523 / JCM 9630 / CIP 104966 / NBRC 100827 / IM2).